We begin with the raw amino-acid sequence, 96 residues long: Aspartyl/glutamyl-tRNA(Asn/Gln) amidotransferase subunit C (96 aa).

The protein belongs to the GatC family. As to quaternary structure, heterotrimer of A, B and C subunits.

It catalyses the reaction L-glutamyl-tRNA(Gln) + L-glutamine + ATP + H2O = L-glutaminyl-tRNA(Gln) + L-glutamate + ADP + phosphate + H(+). The catalysed reaction is L-aspartyl-tRNA(Asn) + L-glutamine + ATP + H2O = L-asparaginyl-tRNA(Asn) + L-glutamate + ADP + phosphate + 2 H(+). Its function is as follows. Allows the formation of correctly charged Asn-tRNA(Asn) or Gln-tRNA(Gln) through the transamidation of misacylated Asp-tRNA(Asn) or Glu-tRNA(Gln) in organisms which lack either or both of asparaginyl-tRNA or glutaminyl-tRNA synthetases. The reaction takes place in the presence of glutamine and ATP through an activated phospho-Asp-tRNA(Asn) or phospho-Glu-tRNA(Gln). This Oceanobacillus iheyensis (strain DSM 14371 / CIP 107618 / JCM 11309 / KCTC 3954 / HTE831) protein is Aspartyl/glutamyl-tRNA(Asn/Gln) amidotransferase subunit C.